The chain runs to 98 residues: NADH-ubiquinone oxidoreductase chain 4L (98 aa).

3 consecutive transmembrane segments (helical) span residues 1-21 (MPSI…GVLI), 26-46 (LMSS…LVSL), and 61-81 (IILL…LVMV).

This sequence belongs to the complex I subunit 4L family. In terms of assembly, core subunit of respiratory chain NADH dehydrogenase (Complex I) which is composed of 45 different subunits.

It localises to the mitochondrion inner membrane. The enzyme catalyses a ubiquinone + NADH + 5 H(+)(in) = a ubiquinol + NAD(+) + 4 H(+)(out). In terms of biological role, core subunit of the mitochondrial membrane respiratory chain NADH dehydrogenase (Complex I) which catalyzes electron transfer from NADH through the respiratory chain, using ubiquinone as an electron acceptor. Part of the enzyme membrane arm which is embedded in the lipid bilayer and involved in proton translocation. In Galago senegalensis (Northern lesser bushbaby), this protein is NADH-ubiquinone oxidoreductase chain 4L (MT-ND4L).